Consider the following 108-residue polypeptide: Peptidyl-prolyl cis-trans isomerase FKBP1A (108 aa).

A PPIase FKBP-type domain is found at glycine 20–glutamate 108. N6-acetyllysine; alternate is present on lysine 53. At lysine 53 the chain carries N6-succinyllysine; alternate.

This sequence belongs to the FKBP-type PPIase family. FKBP1 subfamily. In terms of assembly, interacts with TGFBR1; prevents TGFBR1 phosphorylation by TGFBR2 and stabilizes it in the inactive conformation. Interacts with ACVR1B and SMAD7. Identified in a complex composed of RYR1, PDE4D, PKA, FKBP1A and protein phosphatase 1 (PP1). Interacts directly with RYR2 and RYR3. Interacts directly with RYR1. Interacts with GLMN; rapamycin and FK506 abolish the interaction with GLMN in a dose dependent manner.

It localises to the cytoplasm. Its subcellular location is the cytosol. The protein localises to the sarcoplasmic reticulum membrane. It carries out the reaction [protein]-peptidylproline (omega=180) = [protein]-peptidylproline (omega=0). Its activity is regulated as follows. Inhibited by both FK506 and rapamycin. In terms of biological role, keeps in an inactive conformation TGFBR1, the TGF-beta type I serine/threonine kinase receptor, preventing TGF-beta receptor activation in absence of ligand. Recruits SMAD7 to ACVR1B which prevents the association of SMAD2 and SMAD3 with the activin receptor complex, thereby blocking the activin signal. May modulate the RYR1 calcium channel activity. PPIases accelerate the folding of proteins. It catalyzes the cis-trans isomerization of proline imidic peptide bonds in oligopeptides. In Mus musculus (Mouse), this protein is Peptidyl-prolyl cis-trans isomerase FKBP1A (Fkbp1a).